Reading from the N-terminus, the 212-residue chain is ER lumen protein-retaining receptor 2 (212 aa).

The Lumenal portion of the chain corresponds to 1–4 (MNIF). A helical membrane pass occupies residues 5–24 (RLTGDLSHLAAIVILLLKIW). Residues 25-32 (KTRSCAGI) are Cytoplasmic-facing. Residues 33-52 (SGKSQLLFALVFTTRYLDLF) form a helical membrane-spanning segment. The interaction with the K-D-E-L motif on target proteins stretch occupies residues 47–48 (RY). The Lumenal portion of the chain corresponds to 53-58 (TSFISL). A helical transmembrane segment spans residues 59–79 (YNTSMKLIYIACSYATVYLIY). Topologically, residues 80–92 (MKFKATYDGNHDT) are cytoplasmic. The helical transmembrane segment at 93 to 110 (FRVEFLVVPVGGLSFLVN) threads the bilayer. The Lumenal segment spans residues 111–116 (HDFSPL). Residues 117–135 (EILWTFSIYLESVAILPQL) traverse the membrane as a helical segment. The Cytoplasmic segment spans residues 136–149 (FMISKTGEAETITT). A helical membrane pass occupies residues 150–168 (HYLFFLGLYRALYLVNWIW). The segment at 159–169 (RALYLVNWIWR) is interaction with the K-D-E-L motif on target proteins. At 169–178 (RFYFEGFFDL) the chain is on the lumenal side. A helical membrane pass occupies residues 179 to 199 (IAVVAGVVQTILYCDFFYLYI). Residues 200–212 (TKVLKGKKLSLPA) lie on the Cytoplasmic side of the membrane. Positions 204–207 (KGKK) are important for recycling of cargo proteins with the sequence motif K-D-E-L from the Golgi to the endoplasmic reticulum.

Belongs to the ERD2 family.

The protein resides in the endoplasmic reticulum membrane. Its subcellular location is the golgi apparatus membrane. It localises to the cytoplasmic vesicle. The protein localises to the COPI-coated vesicle membrane. Functionally, membrane receptor that binds the K-D-E-L sequence motif in the C-terminal part of endoplasmic reticulum resident proteins and maintains their localization in that compartment by participating to their vesicle-mediated recycling back from the Golgi. Binding is pH dependent, and is optimal at pH 5-5.4. This chain is ER lumen protein-retaining receptor 2 (Kdelr2), found in Mus musculus (Mouse).